We begin with the raw amino-acid sequence, 479 residues long: Glutamyl-tRNA reductase (479 aa).

Substrate contacts are provided by residues 48 to 51 (TCNR), Ser104, 109 to 111 (ERQ), and Gln115. Cys49 (nucleophile) is an active-site residue. 189-194 (GAGKMG) is an NADP(+) binding site. A disordered region spans residues 417 to 455 (DAGRSLAEAPDADTPDLGEAPSRCPYMTHDPGGDGTETE).

The protein belongs to the glutamyl-tRNA reductase family. Homodimer.

It catalyses the reaction (S)-4-amino-5-oxopentanoate + tRNA(Glu) + NADP(+) = L-glutamyl-tRNA(Glu) + NADPH + H(+). The protein operates within porphyrin-containing compound metabolism; protoporphyrin-IX biosynthesis; 5-aminolevulinate from L-glutamyl-tRNA(Glu): step 1/2. Functionally, catalyzes the NADPH-dependent reduction of glutamyl-tRNA(Glu) to glutamate 1-semialdehyde (GSA). This Salinibacter ruber (strain DSM 13855 / M31) protein is Glutamyl-tRNA reductase.